The primary structure comprises 326 residues: Glycerol-3-phosphate dehydrogenase [NAD(P)+] (326 aa).

NADPH-binding residues include tryptophan 13, arginine 33, and lysine 107. Residues lysine 107, glycine 135, and serine 137 each contribute to the sn-glycerol 3-phosphate site. Alanine 139 is an NADPH binding site. Residues lysine 190, aspartate 243, serine 253, arginine 254, and asparagine 255 each contribute to the sn-glycerol 3-phosphate site. Lysine 190 acts as the Proton acceptor in catalysis. Position 254 (arginine 254) interacts with NADPH. Residues leucine 273 and glutamate 275 each contribute to the NADPH site.

The protein belongs to the NAD-dependent glycerol-3-phosphate dehydrogenase family.

It is found in the cytoplasm. It catalyses the reaction sn-glycerol 3-phosphate + NAD(+) = dihydroxyacetone phosphate + NADH + H(+). The enzyme catalyses sn-glycerol 3-phosphate + NADP(+) = dihydroxyacetone phosphate + NADPH + H(+). It functions in the pathway membrane lipid metabolism; glycerophospholipid metabolism. Its function is as follows. Catalyzes the reduction of the glycolytic intermediate dihydroxyacetone phosphate (DHAP) to sn-glycerol 3-phosphate (G3P), the key precursor for phospholipid synthesis. In Brucella abortus (strain 2308), this protein is Glycerol-3-phosphate dehydrogenase [NAD(P)+].